We begin with the raw amino-acid sequence, 459 residues long: uncharacterized protein (459 aa).

Histidine 79 contributes to the Zn(2+) binding site. The active-site Proton acceptor is the glutamate 82. Histidine 83 and glutamate 159 together coordinate Zn(2+).

Belongs to the peptidase M16 family. Zn(2+) is required as a cofactor.

This is an uncharacterized protein from Streptomyces coelicolor (strain ATCC BAA-471 / A3(2) / M145).